Reading from the N-terminus, the 346-residue chain is UDP-3-O-acylglucosamine N-acyltransferase (346 aa).

The active-site Proton acceptor is His-240.

It belongs to the transferase hexapeptide repeat family. LpxD subfamily. As to quaternary structure, homotrimer.

It carries out the reaction a UDP-3-O-[(3R)-3-hydroxyacyl]-alpha-D-glucosamine + a (3R)-hydroxyacyl-[ACP] = a UDP-2-N,3-O-bis[(3R)-3-hydroxyacyl]-alpha-D-glucosamine + holo-[ACP] + H(+). Its pathway is bacterial outer membrane biogenesis; LPS lipid A biosynthesis. Catalyzes the N-acylation of UDP-3-O-acylglucosamine using 3-hydroxyacyl-ACP as the acyl donor. Is involved in the biosynthesis of lipid A, a phosphorylated glycolipid that anchors the lipopolysaccharide to the outer membrane of the cell. This is UDP-3-O-acylglucosamine N-acyltransferase from Phocaeicola vulgatus (strain ATCC 8482 / DSM 1447 / JCM 5826 / CCUG 4940 / NBRC 14291 / NCTC 11154) (Bacteroides vulgatus).